We begin with the raw amino-acid sequence, 242 residues long: Probable ABC transporter ATP-binding protein PEB1C (242 aa).

The ABC transporter domain occupies 2-236 (IELKNVNKYY…PKTERARLFL (235 aa)). 34-41 (GPSGSGKS) lines the ATP pocket.

Belongs to the ABC transporter superfamily.

Its subcellular location is the cell inner membrane. Most probably involved, with PEB1, in a binding-protein-dependent transport system for an amino acid. Probably responsible for energy coupling to the transport system. The sequence is that of Probable ABC transporter ATP-binding protein PEB1C (peb1C) from Campylobacter jejuni subsp. jejuni serotype O:2 (strain ATCC 700819 / NCTC 11168).